The chain runs to 196 residues: RNA polymerase II subunit B1 CTD phosphatase RTR2 (196 aa).

The segment at 52–123 (YLARLLSPMS…LSQTPLHERR (72 aa)) adopts an RTR1-type zinc-finger fold. 4 residues coordinate Zn(2+): cysteine 75, cysteine 80, cysteine 99, and histidine 103.

It belongs to the RPAP2 family.

It is found in the cytoplasm. Its subcellular location is the nucleus. The enzyme catalyses O-phospho-L-seryl-[protein] + H2O = L-seryl-[protein] + phosphate. It carries out the reaction O-phospho-L-threonyl-[protein] + H2O = L-threonyl-[protein] + phosphate. Its function is as follows. Probable RNA polymerase II subunit B1 C-terminal domain (CTD) phosphatase that regulates RNA polymerase II transcription. May have functional redundancy with RTR1. The protein is RNA polymerase II subunit B1 CTD phosphatase RTR2 (RTR2) of Saccharomyces cerevisiae (strain ATCC 204508 / S288c) (Baker's yeast).